Reading from the N-terminus, the 160-residue chain is SsrA-binding protein (160 aa).

The protein belongs to the SmpB family.

The protein localises to the cytoplasm. Its function is as follows. Required for rescue of stalled ribosomes mediated by trans-translation. Binds to transfer-messenger RNA (tmRNA), required for stable association of tmRNA with ribosomes. tmRNA and SmpB together mimic tRNA shape, replacing the anticodon stem-loop with SmpB. tmRNA is encoded by the ssrA gene; the 2 termini fold to resemble tRNA(Ala) and it encodes a 'tag peptide', a short internal open reading frame. During trans-translation Ala-aminoacylated tmRNA acts like a tRNA, entering the A-site of stalled ribosomes, displacing the stalled mRNA. The ribosome then switches to translate the ORF on the tmRNA; the nascent peptide is terminated with the 'tag peptide' encoded by the tmRNA and targeted for degradation. The ribosome is freed to recommence translation, which seems to be the essential function of trans-translation. The polypeptide is SsrA-binding protein (Mycobacterium leprae (strain Br4923)).